Here is an 80-residue protein sequence, read N- to C-terminus: Exodeoxyribonuclease 7 small subunit (80 aa).

It belongs to the XseB family. In terms of assembly, heterooligomer composed of large and small subunits.

Its subcellular location is the cytoplasm. The catalysed reaction is Exonucleolytic cleavage in either 5'- to 3'- or 3'- to 5'-direction to yield nucleoside 5'-phosphates.. Its function is as follows. Bidirectionally degrades single-stranded DNA into large acid-insoluble oligonucleotides, which are then degraded further into small acid-soluble oligonucleotides. The sequence is that of Exodeoxyribonuclease 7 small subunit from Halalkalibacterium halodurans (strain ATCC BAA-125 / DSM 18197 / FERM 7344 / JCM 9153 / C-125) (Bacillus halodurans).